A 245-amino-acid chain; its full sequence is DNA polymerase sliding clamp (245 aa).

Belongs to the PCNA family. In terms of assembly, homotrimer. The subunits circularize to form a toroid; DNA passes through its center. Replication factor C (RFC) is required to load the toroid on the DNA.

Its function is as follows. Sliding clamp subunit that acts as a moving platform for DNA processing. Responsible for tethering the catalytic subunit of DNA polymerase and other proteins to DNA during high-speed replication. The sequence is that of DNA polymerase sliding clamp from Archaeoglobus fulgidus (strain ATCC 49558 / DSM 4304 / JCM 9628 / NBRC 100126 / VC-16).